Consider the following 459-residue polypeptide: Argininosuccinate lyase (459 aa).

The protein belongs to the lyase 1 family. Argininosuccinate lyase subfamily.

Its subcellular location is the cytoplasm. It catalyses the reaction 2-(N(omega)-L-arginino)succinate = fumarate + L-arginine. It functions in the pathway amino-acid biosynthesis; L-arginine biosynthesis; L-arginine from L-ornithine and carbamoyl phosphate: step 3/3. The chain is Argininosuccinate lyase from Buchnera aphidicola subsp. Schizaphis graminum (strain Sg).